The chain runs to 434 residues: Serine protease HTRA2, mitochondrial (434 aa).

The disordered stretch occupies residues 34 to 65 (YSNNTANITTDSSSSSNNNSNRNNKNDNNNED). Residues 35–60 (SNNTANITTDSSSSSNNNSNRNNKND) show a composition bias toward low complexity. The chain crosses the membrane as a helical span at residues 74 to 92 (LVRFFVPFSLGAVASSLVM). Residues 85 to 88 (AVAS) carry the IAP-binding motif. Residues 151-314 (SNGSGFVIEQ…IPIDYVKVFL (164 aa)) are serine protease. Residues His169, Asp201, and Ser278 each act as charge relay system in the active site. The PDZ domain occupies 337–424 (MGITMLTLTP…NMIIMRGVKQ (88 aa)).

Belongs to the peptidase S1C family. As to quaternary structure, interacts with th/DIAP1 (via BIR 2 domain).

It is found in the mitochondrion intermembrane space. It localises to the mitochondrion membrane. It catalyses the reaction Cleavage of non-polar aliphatic amino-acids at the P1 position, with a preference for Val, Ile and Met. At the P2 and P3 positions, Arg is selected most strongly with a secondary preference for other hydrophilic residues.. In terms of biological role, serine protease that shows proteolytic activity against a non-specific substrate beta-casein. Promotes or induces cell death either by direct binding to and inhibition of BIRC proteins (also called inhibitor of apoptosis proteins, IAPs), leading to an increase in caspase activity, or by a BIRC inhibition-independent, caspase-independent and serine protease activity-dependent mechanism. Can antagonize antiapoptotic activity of th/Diap1 by directly inducing the degradation of th/Diap1. The polypeptide is Serine protease HTRA2, mitochondrial (Drosophila willistoni (Fruit fly)).